Reading from the N-terminus, the 537-residue chain is CTP synthase (537 aa).

The interval 1–267 (MAKFVFVTGG…ADIVLDKLGI (267 aa)) is amidoligase domain. Residue serine 13 participates in CTP binding. Serine 13 serves as a coordination point for UTP. ATP is bound at residue 14 to 19 (SLGKGI). Tyrosine 54 serves as a coordination point for L-glutamine. Aspartate 71 contacts ATP. Positions 71 and 141 each coordinate Mg(2+). CTP-binding positions include 148-150 (DIE), 188-193 (KTKPTQ), and lysine 224. Residues 188–193 (KTKPTQ) and lysine 224 contribute to the UTP site. The region spanning 292 to 534 (TIALVGKYVS…IGAARKYKES (243 aa)) is the Glutamine amidotransferase type-1 domain. Residue glycine 354 coordinates L-glutamine. Cysteine 381 acts as the Nucleophile; for glutamine hydrolysis in catalysis. L-glutamine-binding positions include 382–385 (LGMQ), glutamate 405, and arginine 462. Active-site residues include histidine 507 and glutamate 509.

This sequence belongs to the CTP synthase family. Homotetramer.

It carries out the reaction UTP + L-glutamine + ATP + H2O = CTP + L-glutamate + ADP + phosphate + 2 H(+). The enzyme catalyses L-glutamine + H2O = L-glutamate + NH4(+). It catalyses the reaction UTP + NH4(+) + ATP = CTP + ADP + phosphate + 2 H(+). The protein operates within pyrimidine metabolism; CTP biosynthesis via de novo pathway; CTP from UDP: step 2/2. Allosterically activated by GTP, when glutamine is the substrate; GTP has no effect on the reaction when ammonia is the substrate. The allosteric effector GTP functions by stabilizing the protein conformation that binds the tetrahedral intermediate(s) formed during glutamine hydrolysis. Inhibited by the product CTP, via allosteric rather than competitive inhibition. Its function is as follows. Catalyzes the ATP-dependent amination of UTP to CTP with either L-glutamine or ammonia as the source of nitrogen. Regulates intracellular CTP levels through interactions with the four ribonucleotide triphosphates. The chain is CTP synthase from Pelotomaculum thermopropionicum (strain DSM 13744 / JCM 10971 / SI).